The primary structure comprises 236 residues: Eukaryotic translation initiation factor 3 subunit J (236 aa).

Residues 1 to 88 form a disordered region; sequence MADDWESAAD…EAEAQRVASL (88 aa). Residues 28–46 are compositionally biased toward acidic residues; the sequence is GEDEDEDIKDSWEDEEEKK. 2 stretches are compositionally biased toward basic and acidic residues: residues 47–58 and 68–77; these read DEEKPTKTEAPA and AKLEQQARLE.

Belongs to the eIF-3 subunit J family. Component of the eukaryotic translation initiation factor 3 (eIF-3) complex. The eIF-3 complex interacts with pix.

The protein localises to the cytoplasm. Its function is as follows. Component of the eukaryotic translation initiation factor 3 (eIF-3) complex, which is involved in protein synthesis of a specialized repertoire of mRNAs and, together with other initiation factors, stimulates binding of mRNA and methionyl-tRNAi to the 40S ribosome. The eIF-3 complex specifically targets and initiates translation of a subset of mRNAs involved in cell proliferation. The polypeptide is Eukaryotic translation initiation factor 3 subunit J (Drosophila erecta (Fruit fly)).